Here is a 590-residue protein sequence, read N- to C-terminus: Mitochondrial distribution and morphology protein 34 (590 aa).

Residues 1–225 enclose the SMP-LTD domain; the sequence is MSFIFNRETF…LPSVIFNMSQ (225 aa). Positions 393-405 are enriched in basic residues; it reads RRKIKMRSRKPSK. Residues 393–456 form a disordered region; that stretch reads RRKIKMRSRK…APEGGPNAED (64 aa). The segment covering 413-427 has biased composition (polar residues); sequence PAQNDSGTSSCSNVA.

This sequence belongs to the MDM34 family. In terms of assembly, component of the ER-mitochondria encounter structure (ERMES) or MDM complex, composed of MMM1, MDM10, MDM12 and MDM34.

Its subcellular location is the mitochondrion outer membrane. Its function is as follows. Component of the ERMES/MDM complex, which serves as a molecular tether to connect the endoplasmic reticulum (ER) and mitochondria. Components of this complex are involved in the control of mitochondrial shape and protein biogenesis, and function in nonvesicular lipid trafficking between the ER and mitochondria. MDM34 is required for the interaction of the ER-resident membrane protein MMM1 and the outer mitochondrial membrane-resident beta-barrel protein MDM10. This Eremothecium gossypii (strain ATCC 10895 / CBS 109.51 / FGSC 9923 / NRRL Y-1056) (Yeast) protein is Mitochondrial distribution and morphology protein 34.